Here is a 317-residue protein sequence, read N- to C-terminus: MEQEAAMVVFSCNSGSGGSSSTTDSKQEEEEEEELAAMEEDELIHVVQAAELRLPSSTTATRPSSRYKGVVPQPNGRWGAQIYERHARVWLGTFPDEEAAARAYDVAALRFRGRDAVTNRAPAAEGASAGELAFLAAHSKAEVVDMLRKHTYDDELQQGLRRGSRAQPTPRWAREPLFEKAVTPSDVGKLNRLVVPKQQAERHFPFPLRRHSSDAAGKGVLLNFEDGDGKVWRFRYSYWNSSQSYVLTKGWSRFVREKGLRPGDTVAFSRSAAAWGTEKHLLIDCKKMERNNLATVDDDARVVVKLFGVDIAGDKTR.

A disordered region spans residues 1–37; the sequence is MEQEAAMVVFSCNSGSGGSSSTTDSKQEEEEEEELAA. The span at 27–37 shows a compositional bias: acidic residues; that stretch reads QEEEEEEELAA. Positions 66–121 form a DNA-binding region, AP2/ERF; the sequence is RYKGVVPQPNGRWGAQIYERHARVWLGTFPDEEAAARAYDVAALRFRGRDAVTNRA. The TF-B3 DNA-binding region spans 178–287; it reads FEKAVTPSDV…EKHLLIDCKK (110 aa).

The protein resides in the nucleus. The sequence is that of Putative AP2/ERF and B3 domain-containing protein Os01g0140700 from Oryza sativa subsp. japonica (Rice).